Reading from the N-terminus, the 312-residue chain is Olfactory receptor 51B6 (312 aa).

The Extracellular segment spans residues 1–23; the sequence is MGLNKSASTFQLTGFPGMEKAHH. A glycan (N-linked (GlcNAc...) asparagine) is linked at asparagine 4. The helical transmembrane segment at 24–44 threads the bilayer; the sequence is WIFIPLLAAYISILLGNGTLL. The Cytoplasmic segment spans residues 45-52; it reads FLIRNDHN. Residues 53–73 traverse the membrane as a helical segment; sequence LHEPMYYFLAMLAATDLGVTL. At 74–97 the chain is on the extracellular side; it reads TTMPTVLGVLWLDHREIGHGACFS. The cysteines at positions 95 and 187 are disulfide-linked. Residues 98 to 118 form a helical membrane-spanning segment; it reads QAYFIHTLSVMESGVLLAMAY. Topologically, residues 119 to 137 are cytoplasmic; the sequence is DCFITIRSPLRYTSILTNT. Residues 138-158 traverse the membrane as a helical segment; the sequence is QVMKIGVRVLTRAGLSIMPIV. At 159 to 194 the chain is on the extracellular side; sequence VRLHWFPYCRSHVLSHAFCLHQDVIKLACADITFNR. Residues 195–215 traverse the membrane as a helical segment; the sequence is LYPVVVLFAMVLLDFLIIFFS. Residues 216-235 lie on the Cytoplasmic side of the membrane; sequence YILILKTVMGIGSGGERAKA. Residues 236-256 traverse the membrane as a helical segment; the sequence is LNTCVSHICCILVFYVTVVCL. Over 257–271 the chain is Extracellular; it reads TFIHRFGKHVPHVVH. The chain crosses the membrane as a helical span at residues 272–292; that stretch reads ITMSYIHFLFPPFMNPFIYSI. Residues 293-312 are Cytoplasmic-facing; that stretch reads KTKQIQSGILRLFSLPHSRA.

Belongs to the G-protein coupled receptor 1 family.

The protein resides in the cell membrane. In terms of biological role, odorant receptor. The sequence is that of Olfactory receptor 51B6 (OR51B6) from Homo sapiens (Human).